Consider the following 317-residue polypeptide: Melanocyte-stimulating hormone receptor (317 aa).

Topologically, residues 1–37 are extracellular; the sequence is MAVQGSQRRLLGSLNSTPTAIPQLGLAANQTGARCLE. N-linked (GlcNAc...) asparagine glycosylation occurs at Asn-29. A helical transmembrane segment spans residues 38 to 63; that stretch reads VSIPDGLFLSLGLVSLVENMLVVATI. Topologically, residues 64–72 are cytoplasmic; that stretch reads AKNRNLHSP. A helical membrane pass occupies residues 73 to 93; the sequence is MYCFICCLALSDLLVSGSNVL. Residues 94-118 lie on the Extracellular side of the membrane; the sequence is ETAVILLLEAGALVARAAVLQQVDN. A helical transmembrane segment spans residues 119-140; that stretch reads VIDVITCSSMLSSLCFLGAIAV. The Cytoplasmic portion of the chain corresponds to 141-163; sequence DRYISIFYALRYHSIVTLPRARR. The helical transmembrane segment at 164–183 threads the bilayer; the sequence is AIAAIWVASVLFSTLFIAYC. Topologically, residues 184-191 are extracellular; the sequence is DHTAVLLC. Residues 192–211 form a helical membrane-spanning segment; the sequence is LVVFFLAVLVLMAVLYVHML. The Cytoplasmic segment spans residues 212–240; sequence ARACQHAQGIARLHKRQRPVHQGFGLKGA. A helical membrane pass occupies residues 241–266; sequence VTLTILLGIFFLCWGPFFLHLTLIVL. Topologically, residues 267-279 are extracellular; that stretch reads CPEHPTCGCIFKN. The chain crosses the membrane as a helical span at residues 280–300; it reads FNLFLALIICNAIIDPLIYAF. At 301-317 the chain is on the cytoplasmic side; the sequence is HSQELRRTLKEVLTCSW. Residue Cys-315 is the site of S-palmitoyl cysteine attachment.

It belongs to the G-protein coupled receptor 1 family. In terms of assembly, interacts with MGRN1, but does not undergo MGRN1-mediated ubiquitination; this interaction competes with GNAS-binding and thus inhibits agonist-induced cAMP production. Interacts with OPN3; the interaction results in a decrease in MC1R-mediated cAMP signaling and ultimately a decrease in melanin production in melanocytes.

It is found in the cell membrane. In terms of biological role, receptor for MSH (alpha, beta and gamma) and ACTH. The activity of this receptor is mediated by G proteins which activate adenylate cyclase. Mediates melanogenesis, the production of eumelanin (black/brown) and phaeomelanin (red/yellow), via regulation of cAMP signaling in melanocytes. In Pan troglodytes (Chimpanzee), this protein is Melanocyte-stimulating hormone receptor (MC1R).